A 413-amino-acid chain; its full sequence is uncharacterized protein (413 aa).

The first 22 residues, 1-22, serve as a signal peptide directing secretion; that stretch reads MKKSKASALLWLFSLVGFMLHA.

The protein resides in the periplasm. In terms of biological role, may be involved in ulvan degradation. Ulvan is the main polysaccharide component of the Ulvales (green seaweed) cell wall. It is composed of disaccharide building blocks comprising 3-sulfated rhamnose (Rha3S) linked to D-glucuronic acid (GlcA), L-iduronic acid (IduA), or D-xylose (Xyl). This is an uncharacterized protein from Formosa agariphila (strain DSM 15362 / KCTC 12365 / LMG 23005 / KMM 3901 / M-2Alg 35-1).